The following is a 512-amino-acid chain: Gasdermin-E (512 aa).

Residues 1 to 56 (MFAKATRNFLKEVDAGGDLISVSHLNDSDKLQLLSLVTKKKRYWCWQRPKYQILSA) are membrane targeting domain. Cys45 is modified (S-(2-succinyl)cysteine). Residue Lys120 forms a Glycyl lysine isopeptide (Lys-Gly) (interchain with G-Cter in ubiquitin) linkage. S-(2-succinyl)cysteine is present on residues Cys156, Cys168, and Cys180. Lys189 is covalently cross-linked (Glycyl lysine isopeptide (Lys-Gly) (interchain with G-Cter in ubiquitin)). Residues Cys235, Cys411, and Cys420 each carry the S-(2-succinyl)cysteine modification.

This sequence belongs to the gasdermin family. Homooligomer; homooligomeric ring-shaped pore complex containing 27-28 subunits when inserted in the membrane. Cleavage at Asp-270 by CASP3 (mature and uncleaved precursor forms) or granzyme B (GZMB) relieves autoinhibition and is sufficient to initiate pyroptosis. Post-translationally, succination by the Krebs cycle intermediate fumarate, which leads to S-(2-succinyl)cysteine residues, inhibits processing by caspases, and ability to initiate pyroptosis. Succination modification is catalyzed by a non-enzymatic reaction caused by an accumulation of fumarate. In terms of processing, ubiquitinated on Lys-120 and Lys-189 via 'Lys-48'-linked polyubiquitin chains, leading to proteasomal degradation. Deubiquitinated by USP48, leading to increased stability. Palmitoylated. In terms of tissue distribution, expressed in spleen, kidney, large and small intestine, testicle, stomach and by CD4(+)CD(8+) T cells in thymus. Expressed by macrophages.

The protein resides in the cell membrane. It localises to the cytoplasm. It is found in the cytosol. The full-length protein before cleavage is inactive: intramolecular interactions between N- and C-terminal domains mediate autoinhibition in the absence of activation signal. The intrinsic pyroptosis-inducing activity is carried by the released N-terminal moiety (Gasdermin-E, N-terminal) following cleavage by CASP3 or granzyme B (GZMB). Activated by NLRP1 in the absence of GSDMD expression: NLRP1 cleaves and activates CASP8, promoting downstream activation of CASP3 and subsequent activation of GSDME. Precursor of a pore-forming protein that converts non-inflammatory apoptosis to pyroptosis. This form constitutes the precursor of the pore-forming protein: upon cleavage, the released N-terminal moiety (Gasdermin-E, N-terminal) binds to membranes and forms pores, triggering pyroptosis. Functionally, pore-forming protein produced by cleavage by CASP3 or granzyme B (GZMB), which converts non-inflammatory apoptosis to pyroptosis or promotes granzyme-mediated pyroptosis, respectively. After cleavage, moves to the plasma membrane, homooligomerizes within the membrane and forms pores of 10-15 nanometers (nm) of inner diameter, allowing the release of mature interleukins (IL1B and IL16) and triggering pyroptosis. Binds to inner leaflet lipids, bisphosphorylated phosphatidylinositols, such as phosphatidylinositol (4,5)-bisphosphate. Cleavage by CASP3 switches CASP3-mediated apoptosis induced by TNF or danger signals, such as chemotherapy drugs, to pyroptosis. Mediates secondary necrosis downstream of the mitochondrial apoptotic pathway and CASP3 activation as well as in response to viral agents. Exhibits bactericidal activity. Cleavage by GZMB promotes tumor suppressor activity by triggering robust anti-tumor immunity. Suppresses tumors by mediating granzyme-mediated pyroptosis in target cells of natural killer (NK) cells: cleavage by granzyme B (GZMB), delivered to target cells from NK-cells, triggers pyroptosis of tumor cells and tumor suppression. May play a role in the p53/TP53-regulated cellular response to DNA damage. The sequence is that of Gasdermin-E from Mus musculus (Mouse).